Here is an 864-residue protein sequence, read N- to C-terminus: DNA mismatch repair protein MutS (864 aa).

623–630 provides a ligand contact to ATP; the sequence is GPNMGGKS.

This sequence belongs to the DNA mismatch repair MutS family.

Functionally, this protein is involved in the repair of mismatches in DNA. It is possible that it carries out the mismatch recognition step. This protein has a weak ATPase activity. In Polaromonas sp. (strain JS666 / ATCC BAA-500), this protein is DNA mismatch repair protein MutS.